The following is a 652-amino-acid chain: Probable export ATP-binding/permease protein PFL_2149 (652 aa).

The ABC transporter domain occupies 6-244; sequence LHLTGISRSF…APSEPPVSVR (239 aa). 42 to 49 is a binding site for ATP; the sequence is GASGSGKS. Transmembrane regions (helical) follow at residues 251–271, 277–297, 525–545, 586–606, and 615–635; these read LVAS…ALVS, LLTM…VAIG, LALL…IGVM, IGGA…TLFI, and MGSI…FGFV.

It belongs to the ABC transporter superfamily. Macrolide exporter (TC 3.A.1.122) family. Probably part of a tripartite efflux system, which is composed of an inner membrane transporter, a periplasmic membrane fusion protein, and an outer membrane component.

The protein resides in the cell inner membrane. Its function is as follows. Probably part of a tripartite efflux system. The protein is Probable export ATP-binding/permease protein PFL_2149 of Pseudomonas fluorescens (strain ATCC BAA-477 / NRRL B-23932 / Pf-5).